A 410-amino-acid polypeptide reads, in one-letter code: Arginine deiminase (410 aa).

Cysteine 399 functions as the Amidino-cysteine intermediate in the catalytic mechanism.

This sequence belongs to the arginine deiminase family.

Its subcellular location is the cytoplasm. The enzyme catalyses L-arginine + H2O = L-citrulline + NH4(+). Its pathway is amino-acid degradation; L-arginine degradation via ADI pathway; carbamoyl phosphate from L-arginine: step 1/2. The chain is Arginine deiminase from Listeria monocytogenes serotype 4b (strain F2365).